Here is a 208-residue protein sequence, read N- to C-terminus: Large ribosomal subunit protein uL4 (208 aa).

The segment at 45–95 (RQGTHKAKTRSEVRGGGKKPFRQKGTGNARQGSSRSPIHVGGGTIFGPQPH) is disordered. A compositionally biased stretch (polar residues) spans 69–80 (GTGNARQGSSRS).

Belongs to the universal ribosomal protein uL4 family. Part of the 50S ribosomal subunit.

In terms of biological role, one of the primary rRNA binding proteins, this protein initially binds near the 5'-end of the 23S rRNA. It is important during the early stages of 50S assembly. It makes multiple contacts with different domains of the 23S rRNA in the assembled 50S subunit and ribosome. Functionally, forms part of the polypeptide exit tunnel. This Chlorobium chlorochromatii (strain CaD3) protein is Large ribosomal subunit protein uL4.